The following is a 501-amino-acid chain: Beta-secretase 1 (501 aa).

A signal peptide spans 1–21; it reads MAPALRWLLLWVGSGMLPAQG. Residues 22–45 constitute a propeptide that is removed on maturation; that stretch reads THLGIRLPLRSGLAGPPLGLRLPR. At 22-457 the chain is on the extracellular side; sequence THLGIRLPLR…PQTDESTLMT (436 aa). Positions 75 to 416 constitute a Peptidase A1 domain; that stretch reads YYVEMTVGSP…DRARKRIGFA (342 aa). D93 is an active-site residue. At K126 the chain carries N6-acetyllysine. N-linked (GlcNAc...) asparagine glycans are attached at residues N153, N172, and N223. Disulfide bonds link C216-C420, C278-C443, and C330-C380. An N6-acetyllysine mark is found at K275, K279, and K285. D289 is a catalytic residue. N6-acetyllysine occurs at positions 299, 300, and 307. N-linked (GlcNAc...) asparagine glycosylation is present at N354. A helical transmembrane segment spans residues 458–478; it reads IAYVMAAICALFMLPLCLMVC. S-palmitoyl cysteine attachment occurs at residues C474, C478, C482, and C485. Over 479-501 the chain is Cytoplasmic; that stretch reads QWRCLRCLRHQHDDFADDISLLK. The interval 479–501 is interaction with RTN3; sequence QWRCLRCLRHQHDDFADDISLLK. The DXXLL signature appears at 496 to 500; it reads DISLL. S498 carries the phosphoserine modification. K501 is covalently cross-linked (Glycyl lysine isopeptide (Lys-Gly) (interchain with G-Cter in ubiquitin)).

Belongs to the peptidase A1 family. Monomer. Interacts (via DXXLL motif) with GGA1, GGA2 and GGA3 (via their VHS domain); the interaction highly increases when BACE1 is phosphorylated at Ser-498. Interacts with RTN1; RTN2; RTN3 and RTN4; the interaction leads to inhibition of amyloid precursor protein processing. Interacts with SNX6. Interacts with PCSK9. Interacts with NAT8 and NAT8B. Interacts with BIN1. Interacts (via extracellular domain) with ADAM10 (via extracellular domain). Interacts with SORL1; this interaction may affect binding with APP and hence reduce APP cleavage. Interacts with NRDC AND NRG1. Palmitoylation mediates lipid raft localization. Post-translationally, acetylated in the endoplasmic reticulum at Lys-126, Lys-275, Lys-279, Lys-285, Lys-299, Lys-300 and Lys-307. Acetylation by NAT8 and NAT8B is transient and deacetylation probably occurs in the Golgi. Acetylation regulates the maturation, the transport to the plasma membrane, the stability and the expression of the protein. In terms of processing, ubiquitinated at Lys-501, ubiquitination leads to lysosomal degradation. Monoubiquitinated and 'Lys-63'-linked polyubitinated. Deubiquitnated by USP8; inhibits lysosomal degradation. Phosphorylation at Ser-498 is required for interaction with GGA1 and retrograded transport from endosomal compartments to the trans-Golgi network. Non-phosphorylated BACE1 enters a direct recycling route to the cell surface. Post-translationally, N-Glycosylated. Addition of a bisecting N-acetylglucosamine by MGAT3 blocks lysosomal targeting, further degradation and is required for maintaining stability under stress conditions.

Its subcellular location is the cell membrane. The protein resides in the golgi apparatus. The protein localises to the trans-Golgi network. It localises to the endoplasmic reticulum. It is found in the endosome. Its subcellular location is the cell surface. The protein resides in the cytoplasmic vesicle membrane. The protein localises to the membrane raft. It localises to the lysosome. It is found in the late endosome. Its subcellular location is the early endosome. The protein resides in the recycling endosome. The protein localises to the cell projection. It localises to the axon. It is found in the dendrite. It carries out the reaction Broad endopeptidase specificity. Cleaves Glu-Val-Asn-Leu-|-Asp-Ala-Glu-Phe in the Swedish variant of Alzheimer's amyloid precursor protein.. With respect to regulation, inhibited by RTN3 and RTN4. Responsible for the proteolytic processing of the amyloid precursor protein (APP). Cleaves at the N-terminus of the A-beta peptide sequence, between residues 671 and 672 of APP, leads to the generation and extracellular release of beta-cleaved soluble APP, and a corresponding cell-associated C-terminal fragment which is later released by gamma-secretase. Cleaves CHL1. This Rattus norvegicus (Rat) protein is Beta-secretase 1 (Bace1).